A 713-amino-acid chain; its full sequence is Ribosomal RNA large subunit methyltransferase K/L (713 aa).

Positions 43–154 constitute a THUMP domain; sequence LAYRITLWTR…NGVITIAMNF (112 aa).

It belongs to the methyltransferase superfamily. RlmKL family.

The protein localises to the cytoplasm. It carries out the reaction guanosine(2445) in 23S rRNA + S-adenosyl-L-methionine = N(2)-methylguanosine(2445) in 23S rRNA + S-adenosyl-L-homocysteine + H(+). It catalyses the reaction guanosine(2069) in 23S rRNA + S-adenosyl-L-methionine = N(2)-methylguanosine(2069) in 23S rRNA + S-adenosyl-L-homocysteine + H(+). In terms of biological role, specifically methylates the guanine in position 2445 (m2G2445) and the guanine in position 2069 (m7G2069) of 23S rRNA. The protein is Ribosomal RNA large subunit methyltransferase K/L of Shewanella sp. (strain ANA-3).